The primary structure comprises 442 residues: Proline--tRNA ligase (442 aa).

This sequence belongs to the class-II aminoacyl-tRNA synthetase family. ProS type 2 subfamily. As to quaternary structure, homodimer.

It is found in the cytoplasm. It catalyses the reaction tRNA(Pro) + L-proline + ATP = L-prolyl-tRNA(Pro) + AMP + diphosphate. Its function is as follows. Catalyzes the attachment of proline to tRNA(Pro) in a two-step reaction: proline is first activated by ATP to form Pro-AMP and then transferred to the acceptor end of tRNA(Pro). This is Proline--tRNA ligase from Brucella anthropi (strain ATCC 49188 / DSM 6882 / CCUG 24695 / JCM 21032 / LMG 3331 / NBRC 15819 / NCTC 12168 / Alc 37) (Ochrobactrum anthropi).